A 380-amino-acid chain; its full sequence is Protein RecA (380 aa).

65–72 (GPESSGKT) serves as a coordination point for ATP. The interval 329-380 (DATGEETSETDDQAKEAKDKGTAKNGSKGQSKSTKATPAETALDLGDQPTEK) is disordered. The segment covering 340–350 (DQAKEAKDKGT) has biased composition (basic and acidic residues). Residues 352 to 364 (KNGSKGQSKSTKA) are compositionally biased toward polar residues.

It belongs to the RecA family.

It is found in the cytoplasm. Functionally, can catalyze the hydrolysis of ATP in the presence of single-stranded DNA, the ATP-dependent uptake of single-stranded DNA by duplex DNA, and the ATP-dependent hybridization of homologous single-stranded DNAs. It interacts with LexA causing its activation and leading to its autocatalytic cleavage. The sequence is that of Protein RecA from Lactiplantibacillus plantarum (strain ATCC BAA-793 / NCIMB 8826 / WCFS1) (Lactobacillus plantarum).